The sequence spans 29 residues: Glucagon (29 aa).

Belongs to the glucagon family.

Its subcellular location is the secreted. Its function is as follows. Promotes hydrolysis of glycogen and lipids, and raises the blood sugar level. The sequence is that of Glucagon (gcg) from Torpedo marmorata (Marbled electric ray).